The sequence spans 342 residues: Tetraacyldisaccharide 4'-kinase (342 aa).

68 to 75 (TVGGTGKT) contributes to the ATP binding site.

Belongs to the LpxK family.

The catalysed reaction is a lipid A disaccharide + ATP = a lipid IVA + ADP + H(+). It functions in the pathway glycolipid biosynthesis; lipid IV(A) biosynthesis; lipid IV(A) from (3R)-3-hydroxytetradecanoyl-[acyl-carrier-protein] and UDP-N-acetyl-alpha-D-glucosamine: step 6/6. In terms of biological role, transfers the gamma-phosphate of ATP to the 4'-position of a tetraacyldisaccharide 1-phosphate intermediate (termed DS-1-P) to form tetraacyldisaccharide 1,4'-bis-phosphate (lipid IVA). The sequence is that of Tetraacyldisaccharide 4'-kinase from Burkholderia thailandensis (strain ATCC 700388 / DSM 13276 / CCUG 48851 / CIP 106301 / E264).